Reading from the N-terminus, the 380-residue chain is Protein arginine N-methyltransferase PRMT10 (380 aa).

Residues 26 to 357 (EVDFANYFCT…KENHRLMDME (332 aa)) enclose the SAM-dependent MTase PRMT-type domain. Glutamine 42, arginine 51, glycine 75, glutamate 97, and glutamate 126 together coordinate S-adenosyl-L-methionine. Residues glutamate 140 and glutamate 149 contribute to the active site. Residues 187–227 (ENKMEDLEIAMHDWNLFVEDTESYYGVNMNVLTKAYRAEHE) are dimerization arm.

The protein belongs to the class I-like SAM-binding methyltransferase superfamily. Protein arginine N-methyltransferase family. As to quaternary structure, ring-like homodimer.

The enzyme catalyses L-arginyl-[protein] + 2 S-adenosyl-L-methionine = N(omega),N(omega)-dimethyl-L-arginyl-[protein] + 2 S-adenosyl-L-homocysteine + 2 H(+). Its function is as follows. Methylates (mono and asymmetric dimethylation) the guanidino nitrogens of arginyl residues in some proteins. In Oryza sativa subsp. japonica (Rice), this protein is Protein arginine N-methyltransferase PRMT10 (PRMT10).